Consider the following 192-residue polypeptide: Leucine-rich repeat-containing protein 51 (192 aa).

LRR repeat units lie at residues 49–71, 80–101, and 103–124; these read SLTQ…NQVV, NLAW…LTTF, and NLSV…NKLA. The LRRCT domain occupies 137–175; sequence NPIEEEKGYRQYVLCNLPRITTFDFSGVTRADRSTAEVW.

Widely expressed in adult and embryonic tissues. Expressed in the developing choroid plexus from 12.5 dpc and in the epithelium of the developing airway tract from 14.5 dpc. Also expressed in the postnatal inner ear.

Its subcellular location is the cytoplasm. This is Leucine-rich repeat-containing protein 51 from Mus musculus (Mouse).